The chain runs to 406 residues: 2,3-bisphosphoglycerate-independent phosphoglycerate mutase (406 aa).

The protein belongs to the BPG-independent phosphoglycerate mutase family. A-PGAM subfamily.

The enzyme catalyses (2R)-2-phosphoglycerate = (2R)-3-phosphoglycerate. The protein operates within carbohydrate degradation; glycolysis; pyruvate from D-glyceraldehyde 3-phosphate: step 3/5. Catalyzes the interconversion of 2-phosphoglycerate and 3-phosphoglycerate. This is 2,3-bisphosphoglycerate-independent phosphoglycerate mutase from Methanococcus maripaludis (strain C5 / ATCC BAA-1333).